Here is a 151-residue protein sequence, read N- to C-terminus: Deoxyuridine 5'-triphosphate nucleotidohydrolase (151 aa).

Residues 70-72 (RSG), N83, and 87-89 (VID) contribute to the substrate site.

It belongs to the dUTPase family. Mg(2+) is required as a cofactor.

The enzyme catalyses dUTP + H2O = dUMP + diphosphate + H(+). It functions in the pathway pyrimidine metabolism; dUMP biosynthesis; dUMP from dCTP (dUTP route): step 2/2. This enzyme is involved in nucleotide metabolism: it produces dUMP, the immediate precursor of thymidine nucleotides and it decreases the intracellular concentration of dUTP so that uracil cannot be incorporated into DNA. The sequence is that of Deoxyuridine 5'-triphosphate nucleotidohydrolase from Desulfitobacterium hafniense (strain DSM 10664 / DCB-2).